The primary structure comprises 1173 residues: WASH complex subunit 4 (1173 aa).

The residue at position 2 (Ala2) is an N-acetylalanine. Residue Ser7 is modified to Phosphoserine. Positions 705–1173 are sufficient for interaction with WASHC5; it reads KDLALFFSLN…STVSADPVVK (469 aa). Residues 1135 to 1161 adopt a coiled-coil conformation; it reads RADKTAAEENQEKKEKEEETKTSNGDL. Basic and acidic residues predominate over residues 1142–1155; that stretch reads EENQEKKEKEEETK. Positions 1142–1173 are disordered; it reads EENQEKKEKEEETKTSNGDLSDSTVSADPVVK. Thr1154 is modified (phosphothreonine). Over residues 1157-1167 the composition is skewed to polar residues; that stretch reads SNGDLSDSTVS.

It belongs to the SWIP family. In terms of assembly, component of the WASH core complex also described as WASH regulatory complex (SHRC) composed of WASH (WASHC1, WASH2P or WASH3P), WASHC2 (WASHC2A or WASHC2C), WASHC3, WASHC4 and WASHC5. The WASH core complex associates via WASHC2 with the F-actin-capping protein dimer (formed by CAPZA1, CAPZA2 or CAPZA3 and CAPZB) in a transient or substoichiometric manner which was initially described as WASH complex.

The protein resides in the early endosome. Its function is as follows. Acts as a component of the WASH core complex that functions as a nucleation-promoting factor (NPF) at the surface of endosomes, where it recruits and activates the Arp2/3 complex to induce actin polymerization, playing a key role in the fission of tubules that serve as transport intermediates during endosome sorting. The sequence is that of WASH complex subunit 4 from Homo sapiens (Human).